Here is a 249-residue protein sequence, read N- to C-terminus: Segregation and condensation protein A (249 aa).

It belongs to the ScpA family. Component of a cohesin-like complex composed of ScpA, ScpB and the Smc homodimer, in which ScpA and ScpB bind to the head domain of Smc. The presence of the three proteins is required for the association of the complex with DNA.

The protein resides in the cytoplasm. Functionally, participates in chromosomal partition during cell division. May act via the formation of a condensin-like complex containing Smc and ScpB that pull DNA away from mid-cell into both cell halves. The protein is Segregation and condensation protein A of Listeria monocytogenes serotype 4b (strain CLIP80459).